A 305-amino-acid polypeptide reads, in one-letter code: Mitogen-activated protein kinase kinase 10 (305 aa).

S34 bears the Phosphoserine mark. Residues 48–302 (LEKLSVLGQG…VEELLRHSFV (255 aa)) enclose the Protein kinase domain. Residues 54 to 62 (LGQGSGGTV) and K77 contribute to the ATP site. D165 acts as the Proton acceptor in catalysis. The residue at position 200 (T200) is a Phosphothreonine.

This sequence belongs to the protein kinase superfamily. STE Ser/Thr protein kinase family. MAP kinase kinase subfamily. Interacts with P.syringae type III effector HopF2.

It carries out the reaction L-seryl-[protein] + ATP = O-phospho-L-seryl-[protein] + ADP + H(+). The catalysed reaction is L-threonyl-[protein] + ATP = O-phospho-L-threonyl-[protein] + ADP + H(+). The enzyme catalyses L-tyrosyl-[protein] + ATP = O-phospho-L-tyrosyl-[protein] + ADP + H(+). The sequence is that of Mitogen-activated protein kinase kinase 10 (MKK10) from Arabidopsis thaliana (Mouse-ear cress).